We begin with the raw amino-acid sequence, 225 residues long: Phosphoenolpyruvate guanylyltransferase (225 aa).

Phosphoenolpyruvate is bound by residues T150, G166, and S169. A disordered region spans residues 167–186 (PESARGHANSGARPLNGQWP).

Belongs to the CofC family.

The enzyme catalyses phosphoenolpyruvate + GTP + H(+) = enolpyruvoyl-2-diphospho-5'-guanosine + diphosphate. Its pathway is cofactor biosynthesis; coenzyme F420 biosynthesis. Functionally, guanylyltransferase that catalyzes the activation of phosphoenolpyruvate (PEP) as enolpyruvoyl-2-diphospho-5'-guanosine, via the condensation of PEP with GTP. It is involved in the biosynthesis of coenzyme F420, a hydride carrier cofactor. The sequence is that of Phosphoenolpyruvate guanylyltransferase from Rhodococcus erythropolis (strain PR4 / NBRC 100887).